Consider the following 417-residue polypeptide: UDP-N-acetylglucosamine 1-carboxyvinyltransferase (417 aa).

A phosphoenolpyruvate-binding site is contributed by 22-23 (KN). Residue Arg93 participates in UDP-N-acetyl-alpha-D-glucosamine binding. The active-site Proton donor is the Cys117. Cys117 is modified (2-(S-cysteinyl)pyruvic acid O-phosphothioketal). The UDP-N-acetyl-alpha-D-glucosamine site is built by Asp304 and Ile326.

The protein belongs to the EPSP synthase family. MurA subfamily.

The protein resides in the cytoplasm. It catalyses the reaction phosphoenolpyruvate + UDP-N-acetyl-alpha-D-glucosamine = UDP-N-acetyl-3-O-(1-carboxyvinyl)-alpha-D-glucosamine + phosphate. It functions in the pathway cell wall biogenesis; peptidoglycan biosynthesis. In terms of biological role, cell wall formation. Adds enolpyruvyl to UDP-N-acetylglucosamine. The sequence is that of UDP-N-acetylglucosamine 1-carboxyvinyltransferase from Neisseria gonorrhoeae (strain ATCC 700825 / FA 1090).